Reading from the N-terminus, the 344-residue chain is Tetraacyldisaccharide 4'-kinase (344 aa).

68-75 is an ATP binding site; that stretch reads TAGGNGKT.

This sequence belongs to the LpxK family.

It catalyses the reaction a lipid A disaccharide + ATP = a lipid IVA + ADP + H(+). The protein operates within glycolipid biosynthesis; lipid IV(A) biosynthesis; lipid IV(A) from (3R)-3-hydroxytetradecanoyl-[acyl-carrier-protein] and UDP-N-acetyl-alpha-D-glucosamine: step 6/6. Transfers the gamma-phosphate of ATP to the 4'-position of a tetraacyldisaccharide 1-phosphate intermediate (termed DS-1-P) to form tetraacyldisaccharide 1,4'-bis-phosphate (lipid IVA). In Photobacterium profundum (strain SS9), this protein is Tetraacyldisaccharide 4'-kinase.